The chain runs to 72 residues: Enterobactin biosynthesis protein YbdZ (72 aa).

It belongs to the MbtH-like family.

In terms of biological role, involved in the biosynthesis of the siderophore enterobactin (enterochelin), which is a macrocyclic trimeric lactone of N-(2,3-dihydroxybenzoyl)-serine. Plays a role in the catalytic function of EntF. It is required for adenylation of amino acids in non-ribosomal peptide biosynthesis. In Escherichia coli (strain K12), this protein is Enterobactin biosynthesis protein YbdZ.